A 147-amino-acid polypeptide reads, in one-letter code: Hemoglobin subunit beta-1 (147 aa).

One can recognise a Globin domain in the interval 3-147 (EWTATERTHI…VVSALGRQYH (145 aa)). The heme b site is built by His64 and His93.

The protein belongs to the globin family. Hb 1 is a heterotetramer of two alpha-1 and two beta-1 chains. Hb 2 is a heterotetramer of two alpha-2 and two beta-1 chains. As to expression, red blood cells.

In terms of biological role, involved in oxygen transport from gills to the various peripheral tissues. In Boreogadus saida (Polar cod), this protein is Hemoglobin subunit beta-1 (hbb1).